The sequence spans 115 residues: UPF0738 protein SH1953 (115 aa).

The protein belongs to the UPF0738 family.

The sequence is that of UPF0738 protein SH1953 from Staphylococcus haemolyticus (strain JCSC1435).